The chain runs to 547 residues: Cilia- and flagella- associated protein 210 (547 aa).

A coiled-coil region spans residues 184–254; that stretch reads KLNVEKAFKE…EIEMKKKQGK (71 aa). A disordered region spans residues 210–237; sequence KDHLKQIKEHEEEEERRRKEEEKDAEEI.

As to quaternary structure, microtubule inner protein component of sperm flagellar doublet microtubules. Expressed in trachea multiciliated cells.

The protein resides in the cytoplasm. It localises to the cytoskeleton. The protein localises to the cilium axoneme. Its subcellular location is the flagellum axoneme. Functionally, microtubule inner protein (MIP) part of the dynein-decorated doublet microtubules (DMTs) in cilia axoneme, which is required for motile cilia beating. In Bos taurus (Bovine), this protein is Cilia- and flagella- associated protein 210 (CFAP210).